We begin with the raw amino-acid sequence, 189 residues long: Protein CURLY FLAG LEAF 1 (189 aa).

The EAR motif lies at 50–55; it reads TLELNS. The WW domain occupies 57–91; the sequence is LSLPCHWEQCLDLKTGEIYYINWKNGMRVKEDPRK. A disordered region spans residues 90-148; sequence RKVMNADPDSGDSYGTVCSEEDSSYYDSEESSSESSPSSRENHKEEEEEEEEEEEEEED. Acidic residues-rich tracts occupy residues 108 to 121 and 135 to 148; these read SEED…EESS and EEEE…EEED.

As to quaternary structure, interacts with BHLH122/CFLAP1 and BHLH80/CFLAP2. Binds to HDG1. As to expression, mostly observed in roots, flowers and siliques. Expressed in cells differentiated from epidermal cells such as trichomes, stigmatic papillar cells and guard cells, as well as in tissues undergoing abscission and dehiscence.

Its function is as follows. Negatively regulates the cuticle development by interacting with the HD-ZIP IV transcription factor HDG1. In Arabidopsis thaliana (Mouse-ear cress), this protein is Protein CURLY FLAG LEAF 1.